A 622-amino-acid polypeptide reads, in one-letter code: Threonine--tRNA ligase (622 aa).

The segment at 1-134 (MKTLLIHSDY…GHPLSELSRK (134 aa)) is editing domain. The segment at 199-498 (PHVKYIKEKE…TLEDKPPALP (300 aa)) is catalytic. Residues C291, H343, and H467 each coordinate Zn(2+).

This sequence belongs to the class-II aminoacyl-tRNA synthetase family. Homodimer. Zn(2+) is required as a cofactor.

It is found in the cytoplasm. It catalyses the reaction tRNA(Thr) + L-threonine + ATP = L-threonyl-tRNA(Thr) + AMP + diphosphate + H(+). Functionally, catalyzes the attachment of threonine to tRNA(Thr) in a two-step reaction: L-threonine is first activated by ATP to form Thr-AMP and then transferred to the acceptor end of tRNA(Thr). Also edits incorrectly charged L-seryl-tRNA(Thr). The protein is Threonine--tRNA ligase of Methanococcus vannielii (strain ATCC 35089 / DSM 1224 / JCM 13029 / OCM 148 / SB).